The sequence spans 176 residues: Cytochrome b (176 aa).

A run of 3 helical transmembrane segments spans residues 33 to 53 (FGSL…FLAM), 77 to 98 (WVLR…YLHV), and 113 to 133 (WNMG…GYVL). His83 and His97 together coordinate heme b.

Belongs to the cytochrome b family. The cytochrome bc1 complex contains 11 subunits: 3 respiratory subunits (MT-CYB, CYC1 and UQCRFS1), 2 core proteins (UQCRC1 and UQCRC2) and 6 low-molecular weight proteins (UQCRH/QCR6, UQCRB/QCR7, UQCRQ/QCR8, UQCR10/QCR9, UQCR11/QCR10 and a cleavage product of UQCRFS1). This cytochrome bc1 complex then forms a dimer. The cofactor is heme b.

Its subcellular location is the mitochondrion inner membrane. Component of the ubiquinol-cytochrome c reductase complex (complex III or cytochrome b-c1 complex) that is part of the mitochondrial respiratory chain. The b-c1 complex mediates electron transfer from ubiquinol to cytochrome c. Contributes to the generation of a proton gradient across the mitochondrial membrane that is then used for ATP synthesis. The sequence is that of Cytochrome b (MT-CYB) from Lasionycteris noctivagans (Silver-haired bat).